The following is a 337-amino-acid chain: Glyceraldehyde-3-phosphate dehydrogenase (337 aa).

NAD(+)-binding positions include 12–13 (RI), D34, and K79. Residues 150 to 152 (SCT), T181, 210 to 211 (TG), and R233 each bind D-glyceraldehyde 3-phosphate. Residue C151 is the Nucleophile of the active site. N315 lines the NAD(+) pocket.

This sequence belongs to the glyceraldehyde-3-phosphate dehydrogenase family. Homotetramer.

The protein localises to the cytoplasm. It catalyses the reaction D-glyceraldehyde 3-phosphate + phosphate + NAD(+) = (2R)-3-phospho-glyceroyl phosphate + NADH + H(+). It participates in carbohydrate degradation; glycolysis; pyruvate from D-glyceraldehyde 3-phosphate: step 1/5. The chain is Glyceraldehyde-3-phosphate dehydrogenase (GPD1) from Phaeosphaeria nodorum (strain SN15 / ATCC MYA-4574 / FGSC 10173) (Glume blotch fungus).